We begin with the raw amino-acid sequence, 236 residues long: Probable apoptosis inhibitor 2 (236 aa).

Residues 85–150 form a BIR repeat; sequence RKRSFASFKW…AHAADCAFRR (66 aa). Zn(2+) is bound by residues Cys-123, Cys-126, His-142, and Cys-146. Residues 189-223 form an RING-type zinc finger; sequence CKVCFVNEKSVCFLPCRHLVVCAECSPRCKRCCVC.

The polypeptide is Probable apoptosis inhibitor 2 (IAP2) (Orgyia pseudotsugata multicapsid polyhedrosis virus (OpMNPV)).